An 816-amino-acid polypeptide reads, in one-letter code: Sucrose synthase 2 (816 aa).

Positions 280–757 (MVLNVVILSP…GLQRIEEKYT (478 aa)) are GT-B glycosyltransferase.

It belongs to the glycosyltransferase 1 family. Plant sucrose synthase subfamily. Forms homotetramers and heterotetramers with SS1, all three possible heterotetramers are formed. In terms of tissue distribution, abundant in developing endosperm, low in aleurone, and undetected in coleoptiles and roots. Also detected in crude extracts of anthers and in immature embryos.

The catalysed reaction is an NDP-alpha-D-glucose + D-fructose = a ribonucleoside 5'-diphosphate + sucrose + H(+). In terms of biological role, sucrose-cleaving enzyme that provides UDP-glucose and fructose for various metabolic pathways. This Hordeum vulgare (Barley) protein is Sucrose synthase 2 (SS2).